Reading from the N-terminus, the 65-residue chain is Movement protein TGBp3 (65 aa).

Topologically, residues 1–6 (MLPKMQ) are lumenal. Residues 7–26 (PSAQCLIVFSLAFVLGWYVL) traverse the membrane as a helical segment. Residues 27–65 (RPGNTSCVLLITGESVRLVNCELTKDLVEAVLLRPLKHL) lie on the Cytoplasmic side of the membrane.

The protein belongs to the Tymovirales TGBp3 protein family.

It localises to the host endoplasmic reticulum membrane. Plays a role in viral cell-to-cell propagation, by facilitating genome transport to neighboring plant cells through plasmosdesmata. May induce the formation of granular vesicles derived from the Endoplasmic reticulum, which align on actin filaments. The polypeptide is Movement protein TGBp3 (Potato virus S (strain Peruvian)).